A 118-amino-acid chain; its full sequence is Ig heavy chain V region AC38 205.12 (118 aa).

Residues Glu-1 to Arg-98 form a v segment region. Cys-22 and Cys-96 are disulfide-bonded. The tract at residues Gly-99–Pro-104 is d segment. Residues Phe-105 to Ser-118 are j segment.

In Mus musculus (Mouse), this protein is Ig heavy chain V region AC38 205.12.